The sequence spans 273 residues: Vitamin B12-binding protein (273 aa).

The signal sequence occupies residues 1–18 (MMKTLSSLLLLFSVSLQA). Residues 23-273 (RVISLAPHAT…EHFASIEQKR (251 aa)) enclose the Fe/B12 periplasmic-binding domain. Cys-183 and Cys-263 are joined by a disulfide.

This sequence belongs to the BtuF family. The complex is composed of two ATP-binding proteins (BtuD), two transmembrane proteins (BtuC) and a solute-binding protein (BtuF).

The protein resides in the periplasm. Part of the ABC transporter complex BtuCDF involved in vitamin B12 import. Binds vitamin B12 and delivers it to the periplasmic surface of BtuC. This chain is Vitamin B12-binding protein, found in Vibrio vulnificus (strain YJ016).